The chain runs to 290 residues: MASITLTPSEKDIQAFLEHYQTSLAPSKNPYIRYFLKLPQATVSIYTSGKILLQGEGAEKYASFFGYQAVEQTSGQNLPLIGTDEVGNGSYFGGLAVVAAFVTPDQHDFLRKLGVGDSKTLTDQKIRQIAPILKEKIQHQALLLSPSKYNEVIGDRYNAVSVKVALHNQAIYLLLQKGVQPEKIVIDAFTSAKNYDKYLAQETNRFSNPISLEEKAEGKYLAVAVSSVIARDLFLENLENLERELGYQLPSGAGTASDKVASQILQAYGMQGLNFCAKLHFKNTEKAKNA.

The RNase H type-2 domain maps to 78–290 (LPLIGTDEVG…FKNTEKAKNA (213 aa)). 3 residues coordinate a divalent metal cation: Asp-84, Glu-85, and Asp-187.

The protein belongs to the RNase HII family. RnhC subfamily. It depends on Mn(2+) as a cofactor. Requires Mg(2+) as cofactor.

It is found in the cytoplasm. The catalysed reaction is Endonucleolytic cleavage to 5'-phosphomonoester.. Endonuclease that specifically degrades the RNA of RNA-DNA hybrids. In Streptococcus pneumoniae (strain CGSP14), this protein is Ribonuclease HIII.